The following is a 339-amino-acid chain: D-erythrose-4-phosphate dehydrogenase (339 aa).

NAD(+) is bound by residues 12–13 (RI) and arginine 81. Substrate-binding positions include 154 to 156 (SCT), arginine 200, 213 to 214 (TK), and arginine 236. Cysteine 155 functions as the Nucleophile in the catalytic mechanism. Position 318 (asparagine 318) interacts with NAD(+).

The protein belongs to the glyceraldehyde-3-phosphate dehydrogenase family. Epd subfamily. Homotetramer.

It is found in the cytoplasm. The enzyme catalyses D-erythrose 4-phosphate + NAD(+) + H2O = 4-phospho-D-erythronate + NADH + 2 H(+). The protein operates within cofactor biosynthesis; pyridoxine 5'-phosphate biosynthesis; pyridoxine 5'-phosphate from D-erythrose 4-phosphate: step 1/5. In terms of biological role, catalyzes the NAD-dependent conversion of D-erythrose 4-phosphate to 4-phosphoerythronate. In Escherichia fergusonii (strain ATCC 35469 / DSM 13698 / CCUG 18766 / IAM 14443 / JCM 21226 / LMG 7866 / NBRC 102419 / NCTC 12128 / CDC 0568-73), this protein is D-erythrose-4-phosphate dehydrogenase.